Consider the following 478-residue polypeptide: Early growth response protein 4 (478 aa).

Residues 275 to 302 (TEGLPALLTPPGGEGGSGGEGGEFLAAP) form a disordered region. Positions 286-296 (GGEGGSGGEGG) are enriched in gly residues. C2H2-type zinc fingers lie at residues 372 to 396 (FACP…LRIH), 402 to 424 (FQCR…VRTH), and 430 to 452 (FACD…SKVH).

The protein belongs to the EGR C2H2-type zinc-finger protein family.

Its subcellular location is the nucleus. Transcriptional regulator. Recognizes and binds to the DNA sequence 5'-GCGGGGGCG-3' (GSG). Activates the transcription of target genes whose products are required for mitogenesis and differentiation. This is Early growth response protein 4 (Egr4) from Mus musculus (Mouse).